The sequence spans 191 residues: Orotate phosphoribosyltransferase (191 aa).

114–122 (EDVITTGGS) serves as a coordination point for 5-phospho-alpha-D-ribose 1-diphosphate. Orotate is bound by residues T118 and R146.

It belongs to the purine/pyrimidine phosphoribosyltransferase family. PyrE subfamily. Homodimer. Mg(2+) serves as cofactor.

It carries out the reaction orotidine 5'-phosphate + diphosphate = orotate + 5-phospho-alpha-D-ribose 1-diphosphate. It functions in the pathway pyrimidine metabolism; UMP biosynthesis via de novo pathway; UMP from orotate: step 1/2. In terms of biological role, catalyzes the transfer of a ribosyl phosphate group from 5-phosphoribose 1-diphosphate to orotate, leading to the formation of orotidine monophosphate (OMP). This Desulforamulus reducens (strain ATCC BAA-1160 / DSM 100696 / MI-1) (Desulfotomaculum reducens) protein is Orotate phosphoribosyltransferase.